Reading from the N-terminus, the 137-residue chain is UBAP1-MVB12-associated (UMA)-domain containing protein 1 (137 aa).

The disordered stretch occupies residues 1-72; that stretch reads MFHFFRKPPE…VSDPEMENKA (72 aa). Residues 32–44 show a composition bias toward basic and acidic residues; sequence DEQRMTARGKTSD. Residues 50 to 63 are compositionally biased toward polar residues; sequence PLETNKENSSSVTV. The 49-residue stretch at 86–134 folds into the UMA domain; sequence LSDVPFTLAPHVLAVQGTITDLPDHLLSYDGSENLSRFWYDFTLENSVL.

The chain is UBAP1-MVB12-associated (UMA)-domain containing protein 1 from Homo sapiens (Human).